The sequence spans 1226 residues: DNA-directed RNA polymerase subunit beta'' (1226 aa).

Zn(2+) is bound by residues Cys-223, Cys-297, Cys-304, and Cys-307.

It belongs to the RNA polymerase beta' chain family. RpoC2 subfamily. In plastids the minimal PEP RNA polymerase catalytic core is composed of four subunits: alpha, beta, beta', and beta''. When a (nuclear-encoded) sigma factor is associated with the core the holoenzyme is formed, which can initiate transcription. The cofactor is Zn(2+).

The protein resides in the plastid. It is found in the chloroplast. It catalyses the reaction RNA(n) + a ribonucleoside 5'-triphosphate = RNA(n+1) + diphosphate. Functionally, DNA-dependent RNA polymerase catalyzes the transcription of DNA into RNA using the four ribonucleoside triphosphates as substrates. This Pyropia yezoensis (Susabi-nori) protein is DNA-directed RNA polymerase subunit beta''.